A 194-amino-acid polypeptide reads, in one-letter code: Xanthine phosphoribosyltransferase (194 aa).

2 residues coordinate xanthine: L20 and N27. 128-132 (ANGQA) is a binding site for 5-phospho-alpha-D-ribose 1-diphosphate. Xanthine is bound at residue K156.

This sequence belongs to the purine/pyrimidine phosphoribosyltransferase family. Xpt subfamily. As to quaternary structure, homodimer.

It is found in the cytoplasm. It catalyses the reaction XMP + diphosphate = xanthine + 5-phospho-alpha-D-ribose 1-diphosphate. Its pathway is purine metabolism; XMP biosynthesis via salvage pathway; XMP from xanthine: step 1/1. Its function is as follows. Converts the preformed base xanthine, a product of nucleic acid breakdown, to xanthosine 5'-monophosphate (XMP), so that it can be reused for RNA or DNA synthesis. The sequence is that of Xanthine phosphoribosyltransferase (xpt) from Bacillus subtilis (strain 168).